The following is a 168-amino-acid chain: Chorismate pyruvate-lyase (168 aa).

Met36, Arg78, Leu116, and Glu157 together coordinate substrate.

This sequence belongs to the UbiC family. Monomer.

The protein localises to the cytoplasm. The enzyme catalyses chorismate = 4-hydroxybenzoate + pyruvate. It functions in the pathway cofactor biosynthesis; ubiquinone biosynthesis. Removes the pyruvyl group from chorismate, with concomitant aromatization of the ring, to provide 4-hydroxybenzoate (4HB) for the ubiquinone pathway. In Photorhabdus laumondii subsp. laumondii (strain DSM 15139 / CIP 105565 / TT01) (Photorhabdus luminescens subsp. laumondii), this protein is Chorismate pyruvate-lyase.